The following is a 268-amino-acid chain: Phosphatidylglycerol--prolipoprotein diacylglyceryl transferase (268 aa).

A run of 7 helical transmembrane segments spans residues 23–43 (IGLR…RWLA), 62–82 (LLFN…VFFY), 97–117 (VWEG…AMIW), 132–152 (FVAP…FINL), 179–199 (SQLY…NIFI), 206–226 (ASVA…VEYV), and 241–261 (GQAL…WAYS). Arg145 lines the a 1,2-diacyl-sn-glycero-3-phospho-(1'-sn-glycerol) pocket.

The protein belongs to the Lgt family.

The protein resides in the cell inner membrane. It catalyses the reaction L-cysteinyl-[prolipoprotein] + a 1,2-diacyl-sn-glycero-3-phospho-(1'-sn-glycerol) = an S-1,2-diacyl-sn-glyceryl-L-cysteinyl-[prolipoprotein] + sn-glycerol 1-phosphate + H(+). The protein operates within protein modification; lipoprotein biosynthesis (diacylglyceryl transfer). In terms of biological role, catalyzes the transfer of the diacylglyceryl group from phosphatidylglycerol to the sulfhydryl group of the N-terminal cysteine of a prolipoprotein, the first step in the formation of mature lipoproteins. In Haemophilus influenzae (strain PittEE), this protein is Phosphatidylglycerol--prolipoprotein diacylglyceryl transferase.